Here is a 327-residue protein sequence, read N- to C-terminus: Phenylalanine--tRNA ligase alpha subunit (327 aa).

Glutamate 252 contributes to the Mg(2+) binding site.

It belongs to the class-II aminoacyl-tRNA synthetase family. Phe-tRNA synthetase alpha subunit type 1 subfamily. In terms of assembly, tetramer of two alpha and two beta subunits. The cofactor is Mg(2+).

The protein localises to the cytoplasm. The catalysed reaction is tRNA(Phe) + L-phenylalanine + ATP = L-phenylalanyl-tRNA(Phe) + AMP + diphosphate + H(+). In Photorhabdus laumondii subsp. laumondii (strain DSM 15139 / CIP 105565 / TT01) (Photorhabdus luminescens subsp. laumondii), this protein is Phenylalanine--tRNA ligase alpha subunit.